Consider the following 445-residue polypeptide: Response regulator protein PilR (445 aa).

One can recognise a Response regulatory domain in the interval 5–119 (KALIVDDEPD…RLRELVATAL (115 aa)). 4-aspartylphosphate is present on residues Asp11 and Asp54. The 230-residue stretch at 135-364 (LLGESPPMRA…LENMLERAYT (230 aa)) folds into the Sigma-54 factor interaction domain. ATP is bound by residues 163-170 (GESGSGKE) and 226-235 (ASGGTLFLDE). Positions 418-437 (RWNRTAAAQRLGLTFRSMRY) form a DNA-binding region, H-T-H motif.

Post-translationally, phosphorylated by PilS.

Its subcellular location is the cytoplasm. In terms of biological role, member of the two-component regulatory system PilS/PilR that regulates the expression of multiple genes including the type IV pilus (T4P) major subunit PilA. Thereby, plays a major role in the regulation of multiple motility pathways. Upon appropriate environmental signals, the histidine kinase PilS transfers the phosphoryl group onto PilR. In turn, PilR functions as a transcriptional activator by direct binding to a cis-acting sequence upstream of the pilin gene promoter leading to its activation. The chain is Response regulator protein PilR (pilR) from Pseudomonas aeruginosa (strain ATCC 15692 / DSM 22644 / CIP 104116 / JCM 14847 / LMG 12228 / 1C / PRS 101 / PAO1).